The following is a 180-amino-acid chain: UPF0227 protein YcfP (180 aa).

It belongs to the UPF0227 family.

In Salmonella choleraesuis (strain SC-B67), this protein is UPF0227 protein YcfP.